Here is a 141-residue protein sequence, read N- to C-terminus: Large ribosomal subunit protein uL16 (141 aa).

The protein belongs to the universal ribosomal protein uL16 family. In terms of assembly, part of the 50S ribosomal subunit.

Binds 23S rRNA and is also seen to make contacts with the A and possibly P site tRNAs. This is Large ribosomal subunit protein uL16 from Microchaete diplosiphon (Fremyella diplosiphon).